The sequence spans 1202 residues: Inner capsid protein VP3 (1202 aa).

2 disordered regions span residues 1-45 (MRPI…SGKI) and 73-99 (YTSK…PRVT). A compositionally biased stretch (basic and acidic residues) spans 10–21 (NQERTTTKHQET). The segment covering 27–45 (NEQTTSDQRFTRSSNSGKI) has biased composition (polar residues).

Belongs to the turreted BTV-fold inner capsid family. As to quaternary structure, homodecamer; each decamer is made up of two conformers of VP2, called VP2A and VP2B. 12 homodecamers assemble to form an icosahedral capsid.

The protein resides in the virion. Its function is as follows. Inner capsid protein that self-assembles to form an icosahedral capsid with a T=2 symmetry, which consists of 120 copies of VP2, with channels at each of its five-fold vertices. This capsid constitutes the innermost concentric layer of the viral mature particle. The protein is Inner capsid protein VP3 (S3) of Aedes pseudoscutellaris reovirus (isolate France) (ApRV).